Here is a 272-residue protein sequence, read N- to C-terminus: HMP-PP phosphatase (272 aa).

Asp-8 (nucleophile) is an active-site residue. Asp-8, Asp-10, and Asp-212 together coordinate Mg(2+).

Belongs to the HAD-like hydrolase superfamily. Cof family. It depends on Mg(2+) as a cofactor.

The enzyme catalyses 4-amino-2-methyl-5-(diphosphooxymethyl)pyrimidine + H2O = 4-amino-2-methyl-5-(phosphooxymethyl)pyrimidine + phosphate + H(+). Its function is as follows. Catalyzes the hydrolysis of 4-amino-2-methyl-5-hydroxymethylpyrimidine pyrophosphate (HMP-PP) to 4-amino-2-methyl-5-hydroxymethylpyrimidine phosphate (HMP-P). The chain is HMP-PP phosphatase from Salmonella schwarzengrund (strain CVM19633).